Reading from the N-terminus, the 100-residue chain is NADH-quinone oxidoreductase subunit K (100 aa).

A run of 3 helical transmembrane segments spans residues 4–24 (MQHG…GLLI), 28–48 (LIFM…AWVV), and 60–80 (IFYL…LALL).

It belongs to the complex I subunit 4L family. NDH-1 is composed of 13 different subunits. Subunits NuoA, H, J, K, L, M, N constitute the membrane sector of the complex.

The protein resides in the cell membrane. The enzyme catalyses a quinone + NADH + 5 H(+)(in) = a quinol + NAD(+) + 4 H(+)(out). Its function is as follows. NDH-1 shuttles electrons from NADH, via FMN and iron-sulfur (Fe-S) centers, to quinones in the respiratory chain. The immediate electron acceptor for the enzyme in this species is believed to be ubiquinone. Couples the redox reaction to proton translocation (for every two electrons transferred, four hydrogen ions are translocated across the cytoplasmic membrane), and thus conserves the redox energy in a proton gradient. This Hamiltonella defensa subsp. Acyrthosiphon pisum (strain 5AT) protein is NADH-quinone oxidoreductase subunit K.